The following is a 524-amino-acid chain: Protein-export membrane protein SecD (524 aa).

6 consecutive transmembrane segments (helical) span residues 10–30 (VIFLVAAILLSTFALFSPTMG), 366–386 (KFDSLITGIVAVLAVAGVVFI), 389–409 (GKPQVALPMIVTGLSEVYILL), 420–442 (DLSVIAGFIAVIGTGVDDLIIIA), 465–485 (FWVIGAAAATTIIAMSPLAVL), and 487–507 (LGDLQGFAIFTILGVIVGVLV).

This sequence belongs to the SecD/SecF family. SecD subfamily. Part of the protein translocation apparatus. Forms a homodimer and complexes with SecF.

It localises to the cell membrane. Involved in protein export. In Haloferax volcanii (strain ATCC 29605 / DSM 3757 / JCM 8879 / NBRC 14742 / NCIMB 2012 / VKM B-1768 / DS2) (Halobacterium volcanii), this protein is Protein-export membrane protein SecD.